A 519-amino-acid polypeptide reads, in one-letter code: Cytosol aminopeptidase (519 aa).

Ser-42 bears the Phosphoserine mark. N6-succinyllysine is present on Lys-45. Ser-54 bears the Phosphoserine mark. Lys-61 and Lys-103 each carry N6-succinyllysine. Phosphoserine occurs at positions 180 and 194. Zn(2+) contacts are provided by Leu-202, Met-203, and Thr-205. Lys-221 carries the N6-acetyllysine; alternate modification. Lys-221 bears the N6-succinyllysine; alternate mark. Ser-238 is modified (phosphoserine). 2 residues coordinate Zn(2+): Lys-282 and Asp-287. 4 residues coordinate substrate: Lys-282, Asp-287, Ser-292, and Lys-294. Asp-287 is a Mg(2+) binding site. Residue Lys-294 is part of the active site. Positions 303, 305, 364, and 366 each coordinate Zn(2+). Asp-305 and Asp-364 together coordinate substrate. Mg(2+) is bound by residues Asp-364 and Glu-366. Arg-368 is a catalytic residue. Position 455 is an N6-acetyllysine; alternate (Lys-455). Lys-455 is modified (N6-succinyllysine; alternate). N6-succinyllysine is present on Lys-476. Residue Lys-489 is modified to N6-acetyllysine; alternate. Lys-489 bears the N6-succinyllysine; alternate mark.

This sequence belongs to the peptidase M17 family. In terms of assembly, homohexamer. Zn(2+) serves as cofactor. Requires Mn(2+) as cofactor.

The protein localises to the cytoplasm. It catalyses the reaction Release of an N-terminal amino acid, Xaa-|-Yaa-, in which Xaa is preferably Leu, but may be other amino acids including Pro although not Arg or Lys, and Yaa may be Pro. Amino acid amides and methyl esters are also readily hydrolyzed, but rates on arylamides are exceedingly low.. The enzyme catalyses an S-substituted L-cysteinylglycine + H2O = an S-substituted L-cysteine + glycine. The catalysed reaction is L-cysteinylglycine + H2O = L-cysteine + glycine. It carries out the reaction S-benzyl-L-cysteinylglycine + H2O = S-benzyl-L-cysteine + glycine. It catalyses the reaction Release of N-terminal proline from a peptide.. In terms of biological role, cytosolic metallopeptidase that catalyzes the removal of unsubstituted N-terminal hydrophobic amino acids from various peptides. The presence of Zn(2+) ions is essential for the peptidase activity, and the association with other cofactors can modulate the substrate spectificity of the enzyme. For instance, in the presence of Mn(2+), it displays a specific Cys-Gly hydrolyzing activity of Cys-Gly-S-conjugates. Involved in the metabolism of glutathione and in the degradation of glutathione S-conjugates, which may play a role in the control of the cell redox status. This Sus scrofa (Pig) protein is Cytosol aminopeptidase.